The primary structure comprises 373 residues: Structure-specific endonuclease subunit EME2 (373 aa).

Residues 24 to 52 form a disordered region; it reads RPQTWEISDSDGEGVPAREVGTQAPSPAG. The nuclease-like domain; forms the post-nick DNA binding interface and is involved in DNA recognition and bending stretch occupies residues 47 to 260; that stretch reads APSPAGERRA…LPSKQHRDSQ (214 aa). Residues 282-373 form a helix-hairpin-helix (2HhH); forms the pre-nick DNA binding interface and is involved in DNA recognition and bending region; that stretch reads GLRGVWWRQI…NPDLLLDLSS (92 aa).

Belongs to the EME1/MMS4 family. Part of the heterodimeric MUS81-EME2 complex; the complex forms specifically during the DNA replication phase of the cell cycle.

It localises to the nucleus. In terms of biological role, non-catalytic subunit of the structure-specific, heterodimeric DNA endonuclease MUS81-EME2 which is involved in the maintenance of genome stability. In the complex, EME2 is required for DNA cleavage, participating in DNA recognition and bending. MUS81-EME2 cleaves 3'-flaps and nicked Holliday junctions, and exhibit limited endonuclease activity with 5' flaps and nicked double-stranded DNAs. MUS81-EME2 which is active during the replication of DNA is more specifically involved in replication fork processing. Replication forks frequently encounter obstacles to their passage, including DNA base lesions, DNA interstrand cross-links, difficult-to-replicate sequences, transcription bubbles, or tightly bound proteins. One mechanism for the restart of a stalled replication fork involves nucleolytic cleavage mediated by the MUS81-EME2 endonuclease. By acting upon the stalled fork, MUS81-EME2 generates a DNA double-strand break (DSB) that can be repaired by homologous recombination, leading to the restoration of an active fork. MUS81-EME2 could also function in telomere maintenance. This Mus musculus (Mouse) protein is Structure-specific endonuclease subunit EME2.